The sequence spans 156 residues: RNA pyrophosphohydrolase (156 aa).

The region spanning 6–148 (NYRPNVAAIV…KKNIYVKVIK (143 aa)) is the Nudix hydrolase domain. Positions 43-64 (GGIDKGESVKNALFRELKEEIG) match the Nudix box motif.

Belongs to the Nudix hydrolase family. RppH subfamily. The cofactor is a divalent metal cation.

In terms of biological role, accelerates the degradation of transcripts by removing pyrophosphate from the 5'-end of triphosphorylated RNA, leading to a more labile monophosphorylated state that can stimulate subsequent ribonuclease cleavage. In Campylobacter jejuni subsp. jejuni serotype O:6 (strain 81116 / NCTC 11828), this protein is RNA pyrophosphohydrolase.